The sequence spans 357 residues: UDP-N-acetylglucosamine--N-acetylmuramyl-(pentapeptide) pyrophosphoryl-undecaprenol N-acetylglucosamine transferase (357 aa).

Residues 12–14 (TAG), Arg166, Ser196, and Gln291 each bind UDP-N-acetyl-alpha-D-glucosamine.

It belongs to the glycosyltransferase 28 family. MurG subfamily.

It is found in the cell membrane. It carries out the reaction di-trans,octa-cis-undecaprenyl diphospho-N-acetyl-alpha-D-muramoyl-L-alanyl-D-glutamyl-meso-2,6-diaminopimeloyl-D-alanyl-D-alanine + UDP-N-acetyl-alpha-D-glucosamine = di-trans,octa-cis-undecaprenyl diphospho-[N-acetyl-alpha-D-glucosaminyl-(1-&gt;4)]-N-acetyl-alpha-D-muramoyl-L-alanyl-D-glutamyl-meso-2,6-diaminopimeloyl-D-alanyl-D-alanine + UDP + H(+). It participates in cell wall biogenesis; peptidoglycan biosynthesis. Cell wall formation. Catalyzes the transfer of a GlcNAc subunit on undecaprenyl-pyrophosphoryl-MurNAc-pentapeptide (lipid intermediate I) to form undecaprenyl-pyrophosphoryl-MurNAc-(pentapeptide)GlcNAc (lipid intermediate II). The protein is UDP-N-acetylglucosamine--N-acetylmuramyl-(pentapeptide) pyrophosphoryl-undecaprenol N-acetylglucosamine transferase of Geobacillus kaustophilus (strain HTA426).